Here is a 707-residue protein sequence, read N- to C-terminus: NAD(P)H-quinone oxidoreductase subunit 5, chloroplastic (707 aa).

15 consecutive transmembrane segments (helical) span residues W9–F29, W40–I60, I89–I109, F125–I145, I147–T167, I184–E204, N219–A239, T258–A278, L280–I300, L327–I347, A354–S374, I396–S416, W425–Y445, L538–L558, and F592–L612.

This sequence belongs to the complex I subunit 5 family. NDH is composed of at least 16 different subunits, 5 of which are encoded in the nucleus.

Its subcellular location is the plastid. It localises to the chloroplast thylakoid membrane. The catalysed reaction is a plastoquinone + NADH + (n+1) H(+)(in) = a plastoquinol + NAD(+) + n H(+)(out). It carries out the reaction a plastoquinone + NADPH + (n+1) H(+)(in) = a plastoquinol + NADP(+) + n H(+)(out). Its function is as follows. NDH shuttles electrons from NAD(P)H:plastoquinone, via FMN and iron-sulfur (Fe-S) centers, to quinones in the photosynthetic chain and possibly in a chloroplast respiratory chain. The immediate electron acceptor for the enzyme in this species is believed to be plastoquinone. Couples the redox reaction to proton translocation, and thus conserves the redox energy in a proton gradient. This Malvaviscus arboreus (Turk's cap) protein is NAD(P)H-quinone oxidoreductase subunit 5, chloroplastic (ndhF).